Consider the following 218-residue polypeptide: Adenylate kinase (218 aa).

Residue 11–16 (GAGKGT) participates in ATP binding. The segment at 31-60 (STGDMFREAMANKTKVGLEAKSYIDKGNLV) is NMP. AMP contacts are provided by residues T32, R37, 58-60 (NLV), 86-89 (GFPR), and Q93. The segment at 127 to 165 (ARYMCKNCGATYNKISKQPKVEGTCDRCGSHEFYQREDD) is LID. R128 provides a ligand contact to ATP. Residues C131 and C134 each contribute to the Zn(2+) site. 137-138 (TY) serves as a coordination point for ATP. 2 residues coordinate Zn(2+): C151 and C154. 2 residues coordinate AMP: R162 and R173. Position 201 (Q201) interacts with ATP.

It belongs to the adenylate kinase family. In terms of assembly, monomer.

It is found in the cytoplasm. It carries out the reaction AMP + ATP = 2 ADP. It functions in the pathway purine metabolism; AMP biosynthesis via salvage pathway; AMP from ADP: step 1/1. Functionally, catalyzes the reversible transfer of the terminal phosphate group between ATP and AMP. Plays an important role in cellular energy homeostasis and in adenine nucleotide metabolism. The protein is Adenylate kinase of Lactobacillus acidophilus (strain ATCC 700396 / NCK56 / N2 / NCFM).